A 443-amino-acid chain; its full sequence is Phosphoglucosamine mutase (443 aa).

Ser-102 acts as the Phosphoserine intermediate in catalysis. Mg(2+)-binding residues include Ser-102, Asp-241, Asp-243, and Asp-245. Ser-102 is modified (phosphoserine).

It belongs to the phosphohexose mutase family. Requires Mg(2+) as cofactor. Activated by phosphorylation.

It carries out the reaction alpha-D-glucosamine 1-phosphate = D-glucosamine 6-phosphate. Functionally, catalyzes the conversion of glucosamine-6-phosphate to glucosamine-1-phosphate. This chain is Phosphoglucosamine mutase, found in Polaromonas naphthalenivorans (strain CJ2).